The sequence spans 477 residues: ATP synthase subunit beta (477 aa).

ATP is bound at residue 155–162 (GGAGVGKT).

The protein belongs to the ATPase alpha/beta chains family. F-type ATPases have 2 components, CF(1) - the catalytic core - and CF(0) - the membrane proton channel. CF(1) has five subunits: alpha(3), beta(3), gamma(1), delta(1), epsilon(1). CF(0) has three main subunits: a(1), b(2) and c(9-12). The alpha and beta chains form an alternating ring which encloses part of the gamma chain. CF(1) is attached to CF(0) by a central stalk formed by the gamma and epsilon chains, while a peripheral stalk is formed by the delta and b chains.

It is found in the cell inner membrane. The enzyme catalyses ATP + H2O + 4 H(+)(in) = ADP + phosphate + 5 H(+)(out). Produces ATP from ADP in the presence of a proton gradient across the membrane. The catalytic sites are hosted primarily by the beta subunits. The chain is ATP synthase subunit beta from Mesorhizobium japonicum (strain LMG 29417 / CECT 9101 / MAFF 303099) (Mesorhizobium loti (strain MAFF 303099)).